The chain runs to 805 residues: Nitrite reductase [NAD(P)H] (805 aa).

43 to 79 lines the FAD pocket; sequence YNRILLSKVLQGDTDIKDITLNDWDWYEENNIQLYTN. 193–223 serves as a coordination point for NADP(+); sequence LQNELEKQGMTFLLEKQTEEIVGDDRVEGLR. The [2Fe-2S] cluster site is built by C418, C420, C453, and C456. 4 residues coordinate [4Fe-4S] cluster: C635, C641, C675, and C679. C679 contributes to the siroheme binding site.

It belongs to the nitrite and sulfite reductase 4Fe-4S domain family. Homodimer. It depends on siroheme as a cofactor. [2Fe-2S] cluster is required as a cofactor. The cofactor is [4Fe-4S] cluster. Requires FAD as cofactor.

The catalysed reaction is NH4(+) + 3 NADP(+) + 2 H2O = nitrite + 3 NADPH + 5 H(+). The enzyme catalyses NH4(+) + 3 NAD(+) + 2 H2O = nitrite + 3 NADH + 5 H(+). Its pathway is nitrogen metabolism; nitrate reduction (assimilation). In terms of biological role, required for nitrite assimilation. In Bacillus subtilis (strain 168), this protein is Nitrite reductase [NAD(P)H] (nasD).